We begin with the raw amino-acid sequence, 425 residues long: Dihydroorotase (425 aa).

Residues His-61 and His-63 each coordinate Zn(2+). Residues 63-65 (HLR) and Asn-95 contribute to the substrate site. Positions 153, 180, and 233 each coordinate Zn(2+). Position 279 (Asn-279) interacts with substrate. Residue Asp-306 participates in Zn(2+) binding. Asp-306 is an active-site residue. His-310 serves as a coordination point for substrate.

The protein belongs to the metallo-dependent hydrolases superfamily. DHOase family. Class I DHOase subfamily. Zn(2+) is required as a cofactor.

It catalyses the reaction (S)-dihydroorotate + H2O = N-carbamoyl-L-aspartate + H(+). The protein operates within pyrimidine metabolism; UMP biosynthesis via de novo pathway; (S)-dihydroorotate from bicarbonate: step 3/3. In terms of biological role, catalyzes the reversible cyclization of carbamoyl aspartate to dihydroorotate. This is Dihydroorotase from Geobacter sulfurreducens (strain ATCC 51573 / DSM 12127 / PCA).